A 569-amino-acid polypeptide reads, in one-letter code: MDSSTATAMTAPFIDPTDHVNLKTDTDASENRRMGNYKPSIWNYDFLQSLATHHNIVEERHLKLAEKLKGQVKFMFGAPMEPLAKLELVDVVQRLGLNHLFETEIKEVLFSIYKDGSNGWWFDHLHATSLRFRLLRQCGLFIPQDVFKMFQNKTGELDMKLCDNVKGLLSLYEASYLGWKGENILDEAKAFATKYLKSAWENISEKWLAKRVKHALALPLHWRVPRIEARWFIEAYEQEANMNPTLLKLAKLDFNMVQSIHQKEIGELARWWVTTGLDKLAFARNNLLQSYMWSCAIASDPKFKLARETIVEIGSVLTVVDDAYDVYGSMDELDLYTSSVERWSCVEIDKLPNTLKLIFMSMFNKTNEVGLRVQHERGYNSIPTFIKAWVQQCKSYQKEARWFHGGHTPPLEEYSLNGLVSIGFPLLLITGYVAIAENEAALDKVHPLPDLLHYSSLLSRLINDIGTSPDEMARGDNLKSIHCYMNETGASEEVAREHIKGVIEENWKILNQCCFDQSQFQEPFITFNLNSVRGSHFFYEFGDGFGVTDSWTKVDMKSVLIDPIPLGEE.

The (2E)-geranyl diphosphate site is built by Arg284, Asp321, Asp325, Arg460, and Asn463. Residues Asp321 and Asp325 each coordinate Mg(2+). The short motif at Asp321–Asp325 is the DDXXD motif element. Residues Asn463, Thr467, and Glu471 each coordinate Mg(2+).

Belongs to the terpene synthase family. Tpsb subfamily. The cofactor is Mg(2+). Mn(2+) serves as cofactor.

Functionally, catalyzes the formation of santalene. This chain is Probable santalene synthase (SSY), found in Santalum murrayanum (Bitter quandong).